Here is a 341-residue protein sequence, read N- to C-terminus: GTP-binding protein REM 2 (341 aa).

Residues 1-13 (MHTDLDTDMDADT) show a composition bias toward acidic residues. 2 disordered regions span residues 1–72 (MHTD…SMPV) and 84–106 (VDEL…GSGE). Positions 18-32 (LCSSSSRQASPSGTP) are enriched in polar residues. Ser-27 carries the post-translational modification Phosphoserine. The segment covering 43-54 (QKPEKLLAELDR) has biased composition (basic and acidic residues). Residues 94–105 (SSSGSSDSLGSG) show a composition bias toward low complexity. GTP contacts are provided by residues 122–129 (GESGVGKS), 230–233 (NKSD), and 261–262 (AA). Residues 282 to 309 (RGRGHAGGQRPEPSSPDGPAPPTRRESL) form a disordered region. Residues 294 to 303 (PSSPDGPAPP) show a composition bias toward pro residues. Ser-296 is modified (phosphoserine).

It belongs to the small GTPase superfamily. RGK family. Expressed in brain and kidney.

The protein localises to the cell membrane. In terms of biological role, binds GTP saturably and exhibits a low intrinsic rate of GTP hydrolysis. This chain is GTP-binding protein REM 2 (Rem2), found in Rattus norvegicus (Rat).